A 647-amino-acid chain; its full sequence is Exoribonuclease 2 (647 aa).

An RNB domain is found at 191 to 517 (REDLCALPFV…VNHRLLKALI (327 aa)). The S1 motif domain occupies 563–645 (PTPFNAEIID…DTRSLIARPF (83 aa)).

This sequence belongs to the RNR ribonuclease family. RNase II subfamily.

The protein resides in the cytoplasm. It carries out the reaction Exonucleolytic cleavage in the 3'- to 5'-direction to yield nucleoside 5'-phosphates.. Functionally, involved in mRNA degradation. Hydrolyzes single-stranded polyribonucleotides processively in the 3' to 5' direction. The polypeptide is Exoribonuclease 2 (Edwardsiella piscicida).